A 410-amino-acid polypeptide reads, in one-letter code: Alanine racemase (410 aa).

An RPE1 insert domain is found at 28-76; the sequence is VDFLHNVANKEEFAGNTSPRTAAYTLVREDASLGSTPKLPLGASYAKNL. Lys-83 acts as the Proton acceptor; specific for D-alanine in catalysis. An N6-(pyridoxal phosphate)lysine modification is found at Lys-83. Substrate is bound at residue Arg-182. Tyr-305 serves as the catalytic Proton acceptor; specific for L-alanine. Met-353 provides a ligand contact to substrate.

Belongs to the alanine racemase family. Pyridoxal 5'-phosphate is required as a cofactor.

It catalyses the reaction L-alanine = D-alanine. It functions in the pathway amino-acid biosynthesis; D-alanine biosynthesis; D-alanine from L-alanine: step 1/1. Functionally, catalyzes the interconversion of L-alanine and D-alanine. May also act on other amino acids. The sequence is that of Alanine racemase (alr) from Rickettsia bellii (strain RML369-C).